A 64-amino-acid chain; its full sequence is Large ribosomal subunit protein bL35 (64 aa).

A compositionally biased stretch (basic residues) spans 1-42; it reads MPKAKTHSGASKRFRRTGTGKIVRQKANRRHLLEHKSSKRTR. The disordered stretch occupies residues 1–64; the sequence is MPKAKTHSGA…TKRVKSLLNG (64 aa).

Belongs to the bacterial ribosomal protein bL35 family.

This chain is Large ribosomal subunit protein bL35, found in Mycobacterium ulcerans (strain Agy99).